Here is an 802-residue protein sequence, read N- to C-terminus: Xylanase/beta-glucanase (802 aa).

A signal peptide spans 1–31 (MKKSIFKRYAAAVGLMASVLMFTAVPTTSNA). The 208-residue stretch at 32–239 (ADDQKTGKVG…SNGSANVKSI (208 aa)) folds into the GH11 domain. The Nucleophile role is filled by glutamate 124. Glutamate 226 acts as the Proton donor in catalysis. The tract at residues 245-523 (IDIPDPEPIK…SYLEGHDPSK (279 aa)) is b. Residues 258 to 404 (NGYYLKENFE…YMDGAYAGVK (147 aa)) enclose the CBM-cenC domain. Disordered regions lie at residues 414-436 (SQSVDPPVTEPTNPTNPTGPSVT) and 533-564 (TTTTTTTTTTTSKTTTTTTTTSPAMHGGYRDL). Low complexity-rich tracts occupy residues 419–436 (PPVTEPTNPTNPTGPSVT) and 533–553 (TTTTTTTTTTTSKTTTTTTTT). One can recognise a Dockerin domain in the interval 434–513 (SVTKWGDANC…LIRAISELPE (80 aa)). The interval 524–555 (TTTTTTRITTTTTTTTTTTTSKTTTTTTTTSP) is linker. The region spanning 556–792 (AMHGGYRDLG…WVTYNKNGVQ (237 aa)) is the GH16 domain. Glutamate 684 (nucleophile) is an active-site residue.

This sequence in the N-terminal section; belongs to the glycosyl hydrolase 11 (cellulase G) family. The protein in the C-terminal section; belongs to the glycosyl hydrolase 16 family.

The enzyme catalyses Endohydrolysis of (1-&gt;4)-beta-D-xylosidic linkages in xylans.. It carries out the reaction Hydrolysis of (1-&gt;4)-beta-D-glucosidic linkages in beta-D-glucans containing (1-&gt;3)- and (1-&gt;4)-bonds.. It functions in the pathway glycan degradation; xylan degradation. Functionally, contains two catalytic domains with xylanase and endo-beta-1,3-1,4 glucanase activities. The protein is Xylanase/beta-glucanase (xynD) of Ruminococcus flavefaciens.